A 652-amino-acid polypeptide reads, in one-letter code: Iron-regulated outer membrane virulence protein (652 aa).

Residues 1–25 form the signal peptide; sequence MSRFNPSPVSLSVTLGLMFSASAFA. Positions 33–40 match the TonB box motif; the sequence is ETMVVTAA. Residues 45–162 form the TBDR plug domain; sequence VIQNAPASIS…IGGVINIITR (118 aa). Positions 167-652 constitute a TBDR beta-barrel domain; sequence QWSGNVQLST…RYWLGLDIAF (486 aa). The short motif at 635-652 is the TonB C-terminal box element; the sequence is YGYVEDGRRYWLGLDIAF.

This sequence belongs to the TonB-dependent receptor family.

It is found in the cell outer membrane. Involved in the initial step of iron uptake by binding ferric vibriobactin, an iron chelatin siderophore that allows V.cholerae to extract iron from the environment. In Vibrio cholerae serotype O1 (strain ATCC 39315 / El Tor Inaba N16961), this protein is Iron-regulated outer membrane virulence protein (irgA).